A 146-amino-acid chain; its full sequence is Transcriptional repressor NrdR (146 aa).

A zinc finger spans residues 3-34 (CPFCQNPDTKVIDTRISDDGHSIRRRRVCPKC). In terms of domain architecture, ATP-cone spans 46 to 136 (LLVTKRSGGV…VYQNFAGLED (91 aa)).

It belongs to the NrdR family. It depends on Zn(2+) as a cofactor.

Functionally, negatively regulates transcription of bacterial ribonucleotide reductase nrd genes and operons by binding to NrdR-boxes. The polypeptide is Transcriptional repressor NrdR (Bifidobacterium longum (strain NCC 2705)).